The primary structure comprises 545 residues: ATP synthase F(1) complex subunit alpha, mitochondrial (545 aa).

5 residues coordinate ATP: glutamine 216, glycine 218, lysine 219, threonine 220, and serine 221. Residue threonine 220 participates in Mg(2+) binding. Aspartate 304 lines the Mg(2+) pocket. Residues glutamine 465 and glutamine 467 each coordinate ATP.

This sequence belongs to the ATPase alpha/beta chains family. Homotrimer. Component of the ATP synthase complex composed at least of ATP5F1A/subunit alpha, ATP5F1B/subunit beta, ATP5MC1/subunit c (homooctomer), MT-ATP6/subunit a, MT-ATP8/subunit 8, ATP5ME/subunit e, ATP5MF/subunit f, ATP5MG/subunit g, ATP5MK/subunit k, ATP5MJ/subunit j, ATP5F1C/subunit gamma, ATP5F1D/subunit delta, ATP5F1E/subunit epsilon, ATP5PF/subunit F6, ATP5PB/subunit b, ATP5PD/subunit d, ATP5PO/subunit OSCP. ATP synthase complex consists of a soluble F(1) head domain (subunits alpha(3) and beta(3)) - the catalytic core - and a membrane F(0) domain - the membrane proton channel (subunits c, a, 8, e, f, g, k and j). These two domains are linked by a central stalk (subunits gamma, delta, and epsilon) rotating inside the F1 region and a stationary peripheral stalk (subunits F6, b, d, and OSCP).

The protein localises to the mitochondrion inner membrane. In terms of biological role, subunit alpha, of the mitochondrial membrane ATP synthase complex (F(1)F(0) ATP synthase or Complex V) that produces ATP from ADP in the presence of a proton gradient across the membrane which is generated by electron transport complexes of the respiratory chain. ATP synthase complex consist of a soluble F(1) head domain - the catalytic core - and a membrane F(1) domain - the membrane proton channel. These two domains are linked by a central stalk rotating inside the F(1) region and a stationary peripheral stalk. During catalysis, ATP synthesis in the catalytic domain of F(1) is coupled via a rotary mechanism of the central stalk subunits to proton translocation. In vivo, can only synthesize ATP although its ATP hydrolase activity can be activated artificially in vitro. With the catalytic subunit beta (ATP5F1B), forms the catalytic core in the F(1) domain. Subunit alpha does not bear the catalytic high-affinity ATP-binding sites. This chain is ATP synthase F(1) complex subunit alpha, mitochondrial, found in Xenopus laevis (African clawed frog).